The primary structure comprises 548 residues: Thermosome subunit beta (548 aa).

The protein belongs to the TCP-1 chaperonin family. As to quaternary structure, forms a Heterooligomeric complex of two stacked eight-membered rings.

Functionally, molecular chaperone; binds unfolded polypeptides in vitro, and has a weak ATPase activity. This Aeropyrum pernix (strain ATCC 700893 / DSM 11879 / JCM 9820 / NBRC 100138 / K1) protein is Thermosome subunit beta (thsB).